A 167-amino-acid polypeptide reads, in one-letter code: Lipoprotein signal peptidase (167 aa).

2 helical membrane-spanning segments follow: residues 67 to 87 (WILVALTLFAILLLSIWLWRA) and 91 to 111 (LVALALGCIIGGALGNAIDRI). Catalysis depends on residues Asp-118 and Asp-136. Residues 127–147 (FSWYVFNLADAAIVAGVALLI) traverse the membrane as a helical segment.

Belongs to the peptidase A8 family.

The protein resides in the cell inner membrane. It carries out the reaction Release of signal peptides from bacterial membrane prolipoproteins. Hydrolyzes -Xaa-Yaa-Zaa-|-(S,diacylglyceryl)Cys-, in which Xaa is hydrophobic (preferably Leu), and Yaa (Ala or Ser) and Zaa (Gly or Ala) have small, neutral side chains.. It functions in the pathway protein modification; lipoprotein biosynthesis (signal peptide cleavage). Functionally, this protein specifically catalyzes the removal of signal peptides from prolipoproteins. The polypeptide is Lipoprotein signal peptidase (Beijerinckia indica subsp. indica (strain ATCC 9039 / DSM 1715 / NCIMB 8712)).